Reading from the N-terminus, the 192-residue chain is Probable molybdenum cofactor guanylyltransferase (192 aa).

GTP contacts are provided by residues 8–10 (LAG), Lys20, Asp69, and Asp94. Asp94 is a binding site for Mg(2+).

The protein belongs to the MobA family. Mg(2+) serves as cofactor.

The protein localises to the cytoplasm. The enzyme catalyses Mo-molybdopterin + GTP + H(+) = Mo-molybdopterin guanine dinucleotide + diphosphate. In terms of biological role, transfers a GMP moiety from GTP to Mo-molybdopterin (Mo-MPT) cofactor (Moco or molybdenum cofactor) to form Mo-molybdopterin guanine dinucleotide (Mo-MGD) cofactor. This is Probable molybdenum cofactor guanylyltransferase from Pyrococcus horikoshii (strain ATCC 700860 / DSM 12428 / JCM 9974 / NBRC 100139 / OT-3).